A 73-amino-acid polypeptide reads, in one-letter code: Alpha-bungarotoxin N3 (73 aa).

5 disulfides stabilise this stretch: cysteine 3/cysteine 23, cysteine 16/cysteine 43, cysteine 28/cysteine 32, cysteine 47/cysteine 58, and cysteine 59/cysteine 64.

This sequence belongs to the three-finger toxin family. Long-chain subfamily. Type II alpha-neurotoxin sub-subfamily. In terms of assembly, monomer in solution, homodimer in crystal state. Expressed by the venom gland.

The protein localises to the secreted. Functionally, binds with high affinity to muscular (alpha-1/CHRNA1) and neuronal (alpha-7/CHRNA7) nicotinic acetylcholine receptor (nAChR) and inhibits acetylcholine from binding to the receptor, thereby impairing neuromuscular and neuronal transmission. Mice injected with this toxin develop flaccid paralysis followed by death. Irreversibly inhibits twitches in a concentration-dependent manner in rat phrenic nerve-hemidiaphragm and chick biventer cervicis muscle. The chain is Alpha-bungarotoxin N3 from Bungarus candidus (Malayan krait).